A 387-amino-acid chain; its full sequence is Eukaryotic translation initiation factor 3 subunit M (387 aa).

The PCI domain occupies 181 to 340; it reads LSSKVMIELL…HKVHITSTMH (160 aa).

This sequence belongs to the eIF-3 subunit M family. Component of the eukaryotic translation initiation factor 3 (eIF-3) complex. The eIF-3 complex interacts with pix.

Its subcellular location is the cytoplasm. The protein localises to the golgi apparatus. In terms of biological role, component of the eukaryotic translation initiation factor 3 (eIF-3) complex, which is involved in protein synthesis of a specialized repertoire of mRNAs and, together with other initiation factors, stimulates binding of mRNA and methionyl-tRNAi to the 40S ribosome. The eIF-3 complex specifically targets and initiates translation of a subset of mRNAs involved in cell proliferation. The polypeptide is Eukaryotic translation initiation factor 3 subunit M (Drosophila erecta (Fruit fly)).